The following is a 795-amino-acid chain: Phenylalanine--tRNA ligase beta subunit (795 aa).

The 111-residue stretch at 39–149 folds into the tRNA-binding domain; the sequence is SGEFSGVVVA…ADAPIGVDIR (111 aa). A B5 domain is found at 402 to 477; sequence PKQPIIRLRR…RIYGYNRIPN (76 aa). The Mg(2+) site is built by Asp-455, Asp-461, Glu-464, and Glu-465. An FDX-ACB domain is found at 701 to 794; it reads SKFPANNRDI…LAQRFQASLR (94 aa).

This sequence belongs to the phenylalanyl-tRNA synthetase beta subunit family. Type 1 subfamily. Tetramer of two alpha and two beta subunits. The cofactor is Mg(2+).

The protein localises to the cytoplasm. It carries out the reaction tRNA(Phe) + L-phenylalanine + ATP = L-phenylalanyl-tRNA(Phe) + AMP + diphosphate + H(+). The protein is Phenylalanine--tRNA ligase beta subunit of Haemophilus ducreyi (strain 35000HP / ATCC 700724).